Here is a 415-residue protein sequence, read N- to C-terminus: Pectin acetylesterase 12 (415 aa).

Positions 1 to 20 are cleaved as a signal peptide; it reads MVKLLLVGFVVAGIILGTQA. A glycan (N-linked (GlcNAc...) asparagine) is linked at N27. Active-site charge relay system residues include S197, D293, and H360.

Belongs to the pectinacetylesterase family.

Its subcellular location is the secreted. The protein localises to the cell wall. Hydrolyzes acetyl esters in homogalacturonan regions of pectin. In type I primary cell wall, galacturonic acid residues of pectin can be acetylated at the O-2 and O-3 positions. Decreasing the degree of acetylation of pectin gels in vitro alters their physical properties. The sequence is that of Pectin acetylesterase 12 from Arabidopsis thaliana (Mouse-ear cress).